A 417-amino-acid polypeptide reads, in one-letter code: UDP-N-acetylglucosamine 1-carboxyvinyltransferase (417 aa).

Lysine 22–asparagine 23 provides a ligand contact to phosphoenolpyruvate. A UDP-N-acetyl-alpha-D-glucosamine-binding site is contributed by arginine 92. Cysteine 116 serves as the catalytic Proton donor. Residue cysteine 116 is modified to 2-(S-cysteinyl)pyruvic acid O-phosphothioketal. Residues aspartate 304 and isoleucine 326 each contribute to the UDP-N-acetyl-alpha-D-glucosamine site.

It belongs to the EPSP synthase family. MurA subfamily.

Its subcellular location is the cytoplasm. It carries out the reaction phosphoenolpyruvate + UDP-N-acetyl-alpha-D-glucosamine = UDP-N-acetyl-3-O-(1-carboxyvinyl)-alpha-D-glucosamine + phosphate. It participates in cell wall biogenesis; peptidoglycan biosynthesis. Its function is as follows. Cell wall formation. Adds enolpyruvyl to UDP-N-acetylglucosamine. This is UDP-N-acetylglucosamine 1-carboxyvinyltransferase from Desulforapulum autotrophicum (strain ATCC 43914 / DSM 3382 / VKM B-1955 / HRM2) (Desulfobacterium autotrophicum).